Consider the following 168-residue polypeptide: Phosphopantetheine adenylyltransferase (168 aa).

T14 lines the substrate pocket. ATP contacts are provided by residues 14–15 (TF) and H22. Substrate-binding residues include K46, L78, and R92. Residues 93–95 (GLR), E103, and 128–134 (YSFISSS) contribute to the ATP site.

It belongs to the bacterial CoaD family. As to quaternary structure, homohexamer. It depends on Mg(2+) as a cofactor.

Its subcellular location is the cytoplasm. It catalyses the reaction (R)-4'-phosphopantetheine + ATP + H(+) = 3'-dephospho-CoA + diphosphate. Its pathway is cofactor biosynthesis; coenzyme A biosynthesis; CoA from (R)-pantothenate: step 4/5. Reversibly transfers an adenylyl group from ATP to 4'-phosphopantetheine, yielding dephospho-CoA (dPCoA) and pyrophosphate. The chain is Phosphopantetheine adenylyltransferase from Xanthomonas campestris pv. campestris (strain 8004).